A 237-amino-acid chain; its full sequence is uncharacterized protein (237 aa).

Residues 1 to 27 (MKSFLRKPKFWLLLLGGLSTSSIILSA) form the signal peptide. Cys28 carries the N-palmitoyl cysteine lipid modification. The S-diacylglycerol cysteine moiety is linked to residue Cys28.

The protein belongs to the MG307/MG309/MG338 family.

The protein resides in the membrane. This is an uncharacterized protein from Mycoplasma pneumoniae (strain ATCC 29342 / M129 / Subtype 1) (Mycoplasmoides pneumoniae).